A 125-amino-acid chain; its full sequence is Histone H2A (125 aa).

Over residues 1-18 (MSGRGKGGKAKAKAKSRS) the composition is skewed to basic residues. Residues 1–21 (MSGRGKGGKAKAKAKSRSSRA) form a disordered region. Residue Ser2 is modified to N-acetylserine. Gln104 carries the post-translational modification N5-methylglutamine.

The protein belongs to the histone H2A family. In terms of assembly, the nucleosome is a histone octamer containing two molecules each of H2A, H2B, H3 and H4 assembled in one H3-H4 heterotetramer and two H2A-H2B heterodimers. The octamer wraps approximately 147 bp of DNA.

The protein resides in the nucleus. Its subcellular location is the chromosome. Core component of nucleosome. Nucleosomes wrap and compact DNA into chromatin, limiting DNA accessibility to the cellular machineries which require DNA as a template. Histones thereby play a central role in transcription regulation, DNA repair, DNA replication and chromosomal stability. DNA accessibility is regulated via a complex set of post-translational modifications of histones, also called histone code, and nucleosome remodeling. The protein is Histone H2A of Mytilus trossulus (Blue mussel).